The sequence spans 420 residues: Probable pectate lyase C (420 aa).

An N-terminal signal peptide occupies residues 1 to 20; that stretch reads MKLSAPLLVSLAAFSQAVTA. Residues N49, N165, and N202 are each glycosylated (N-linked (GlcNAc...) asparagine). The active site involves R205. An EF-hand domain is found at 262–297; that stretch reads NANFHGYVDNNYYDPDKDGQLDGSELGVSSSNYGGM. Residues D275, D277, D279, Q281, and E286 each contribute to the Ca(2+) site. The disordered stretch occupies residues 357 to 395; it reads ATMGGPGTLNGGTPAKDTDGDGIPDEAEKQLGTDPNTND. N394 is a glycosylation site (N-linked (GlcNAc...) asparagine).

The protein belongs to the polysaccharide lyase 1 family. It depends on Ca(2+) as a cofactor.

It localises to the secreted. It carries out the reaction Eliminative cleavage of (1-&gt;4)-alpha-D-galacturonan to give oligosaccharides with 4-deoxy-alpha-D-galact-4-enuronosyl groups at their non-reducing ends.. Pectinolytic enzyme consist of four classes of enzymes: pectin lyase, polygalacturonase, pectin methylesterase and rhamnogalacturonase. Among pectinolytic enzymes, pectin lyase is the most important in depolymerization of pectin, since it cleaves internal glycosidic bonds of highly methylated pectins. Favors pectate, the anion, over pectin, the methyl ester. This chain is Probable pectate lyase C (plyC), found in Neosartorya fischeri (strain ATCC 1020 / DSM 3700 / CBS 544.65 / FGSC A1164 / JCM 1740 / NRRL 181 / WB 181) (Aspergillus fischerianus).